Reading from the N-terminus, the 131-residue chain is Glycine cleavage system H protein (131 aa).

The region spanning 24 to 106 (TLRVGITDYA…YGEGWLVDLQ (83 aa)) is the Lipoyl-binding domain. Residue Lys-65 is modified to N6-lipoyllysine.

This sequence belongs to the GcvH family. The glycine cleavage system is composed of four proteins: P, T, L and H. (R)-lipoate is required as a cofactor.

In terms of biological role, the glycine cleavage system catalyzes the degradation of glycine. The H protein shuttles the methylamine group of glycine from the P protein to the T protein. This chain is Glycine cleavage system H protein, found in Mycobacterium sp. (strain JLS).